Consider the following 215-residue polypeptide: Ribosomal RNA small subunit methyltransferase G (215 aa).

The S-adenosyl-L-methionine site is built by glycine 71, leucine 76, and arginine 135.

It belongs to the methyltransferase superfamily. RNA methyltransferase RsmG family.

The protein localises to the cytoplasm. Specifically methylates the N7 position of a guanine in 16S rRNA. The chain is Ribosomal RNA small subunit methyltransferase G from Salinibacter ruber (strain DSM 13855 / M31).